A 221-amino-acid polypeptide reads, in one-letter code: Stromal cell-derived factor 2-like protein 1 (221 aa).

An N-terminal signal peptide occupies residues 1–28 (MWSAGRGGAAWPVLLGLLLALLVPGGGA). 3 consecutive MIR domains span residues 33–87 (AELV…IRGG), 95–150 (GSPV…VRCS), and 151–205 (GQHW…AMEG). At serine 215 the chain carries Phosphoserine. The Prevents secretion from ER motif lies at 218-221 (HDEL).

In terms of assembly, part of a large chaperone multiprotein complex comprising CABP1, DNAJB11, HSP90B1, HSPA5, HYOU, PDIA2, PDIA4, PPIB, SDF2L1, UGGT1 and very small amounts of ERP29, but not, or at very low levels, CALR nor CANX. Ubiquitously expressed with high expression in testis, moderate expression in the pancreas, spleen, prostate, small intestine and colon. Very low expression is seen in brain and skeletal muscle.

Its subcellular location is the endoplasmic reticulum lumen. In Homo sapiens (Human), this protein is Stromal cell-derived factor 2-like protein 1 (SDF2L1).